The sequence spans 38 residues: Cytochrome b559 subunit beta (38 aa).

The chain crosses the membrane as a helical span at residues Trp13 to Ser29. Position 17 (His17) interacts with heme.

It belongs to the PsbE/PsbF family. Heterodimer of an alpha subunit and a beta subunit. PSII is composed of 1 copy each of membrane proteins PsbA, PsbB, PsbC, PsbD, PsbE, PsbF, PsbH, PsbI, PsbJ, PsbK, PsbL, PsbM, PsbT, PsbX, PsbY, PsbZ, Psb30/Ycf12, at least 3 peripheral proteins of the oxygen-evolving complex and a large number of cofactors. It forms dimeric complexes. Requires heme b as cofactor.

The protein resides in the plastid. It localises to the chloroplast thylakoid membrane. Functionally, this b-type cytochrome is tightly associated with the reaction center of photosystem II (PSII). PSII is a light-driven water:plastoquinone oxidoreductase that uses light energy to abstract electrons from H(2)O, generating O(2) and a proton gradient subsequently used for ATP formation. It consists of a core antenna complex that captures photons, and an electron transfer chain that converts photonic excitation into a charge separation. This Ostreococcus tauri protein is Cytochrome b559 subunit beta.